The sequence spans 132 residues: Arginine decarboxylase proenzyme (132 aa).

Ser70 (schiff-base intermediate with substrate; via pyruvic acid) is an active-site residue. At Ser70 the chain carries Pyruvic acid (Ser); by autocatalysis. The Proton acceptor; for processing activity role is filled by His75. The active-site Proton donor; for catalytic activity is the Cys90.

It belongs to the prokaryotic AdoMetDC family. Type 1 subfamily. Heterooctamer of four alpha and four beta chains arranged as a tetramer of alpha/beta heterodimers. Pyruvate is required as a cofactor. Is synthesized initially as an inactive proenzyme. Formation of the active enzyme involves a self-maturation process in which the active site pyruvoyl group is generated from an internal serine residue via an autocatalytic post-translational modification. Two non-identical subunits are generated from the proenzyme in this reaction, and the pyruvate is formed at the N-terminus of the alpha chain, which is derived from the carboxyl end of the proenzyme. The post-translation cleavage follows an unusual pathway, termed non-hydrolytic serinolysis, in which the side chain hydroxyl group of the serine supplies its oxygen atom to form the C-terminus of the beta chain, while the remainder of the serine residue undergoes an oxidative deamination to produce ammonia and the pyruvoyl group blocking the N-terminus of the alpha chain.

It carries out the reaction L-arginine + H(+) = agmatine + CO2. It functions in the pathway amine and polyamine biosynthesis; agmatine biosynthesis; agmatine from L-arginine: step 1/1. Its function is as follows. Specifically catalyzes the decarboxylation of L-arginine to agmatine. Has no S-adenosylmethionine decarboxylase (AdoMetDC) activity. The polypeptide is Arginine decarboxylase proenzyme (Aeropyrum pernix (strain ATCC 700893 / DSM 11879 / JCM 9820 / NBRC 100138 / K1)).